The sequence spans 185 residues: Elongation factor P (185 aa).

The protein belongs to the elongation factor P family.

Its subcellular location is the cytoplasm. It participates in protein biosynthesis; polypeptide chain elongation. In terms of biological role, involved in peptide bond synthesis. Stimulates efficient translation and peptide-bond synthesis on native or reconstituted 70S ribosomes in vitro. Probably functions indirectly by altering the affinity of the ribosome for aminoacyl-tRNA, thus increasing their reactivity as acceptors for peptidyl transferase. This Gloeothece citriformis (strain PCC 7424) (Cyanothece sp. (strain PCC 7424)) protein is Elongation factor P.